The chain runs to 130 residues: Small ribosomal subunit protein uS11 (130 aa).

It belongs to the universal ribosomal protein uS11 family. Part of the 30S ribosomal subunit. Interacts with proteins S7 and S18. Binds to IF-3.

Its function is as follows. Located on the platform of the 30S subunit, it bridges several disparate RNA helices of the 16S rRNA. Forms part of the Shine-Dalgarno cleft in the 70S ribosome. The sequence is that of Small ribosomal subunit protein uS11 from Borreliella afzelii (strain PKo) (Borrelia afzelii).